The primary structure comprises 125 residues: Holo-[acyl-carrier-protein] synthase (125 aa).

Mg(2+) contacts are provided by aspartate 8 and glutamate 57.

Belongs to the P-Pant transferase superfamily. AcpS family. It depends on Mg(2+) as a cofactor.

Its subcellular location is the cytoplasm. It catalyses the reaction apo-[ACP] + CoA = holo-[ACP] + adenosine 3',5'-bisphosphate + H(+). Transfers the 4'-phosphopantetheine moiety from coenzyme A to a Ser of acyl-carrier-protein. The sequence is that of Holo-[acyl-carrier-protein] synthase from Azoarcus sp. (strain BH72).